The sequence spans 438 residues: Serine--tRNA ligase (438 aa).

Residue 243 to 245 participates in L-serine binding; sequence TAE. Residue 274–276 participates in ATP binding; sequence RSE. Glu297 lines the L-serine pocket. 361 to 364 serves as a coordination point for ATP; sequence EISS. Ser396 contributes to the L-serine binding site.

The protein belongs to the class-II aminoacyl-tRNA synthetase family. Type-1 seryl-tRNA synthetase subfamily. Homodimer. The tRNA molecule binds across the dimer.

It is found in the cytoplasm. The enzyme catalyses tRNA(Ser) + L-serine + ATP = L-seryl-tRNA(Ser) + AMP + diphosphate + H(+). The catalysed reaction is tRNA(Sec) + L-serine + ATP = L-seryl-tRNA(Sec) + AMP + diphosphate + H(+). It participates in aminoacyl-tRNA biosynthesis; selenocysteinyl-tRNA(Sec) biosynthesis; L-seryl-tRNA(Sec) from L-serine and tRNA(Sec): step 1/1. Functionally, catalyzes the attachment of serine to tRNA(Ser). Is also able to aminoacylate tRNA(Sec) with serine, to form the misacylated tRNA L-seryl-tRNA(Sec), which will be further converted into selenocysteinyl-tRNA(Sec). In Ralstonia pickettii (strain 12J), this protein is Serine--tRNA ligase.